The sequence spans 494 residues: Cysteine--tRNA ligase (494 aa).

A Zn(2+)-binding site is contributed by C29. Positions 31–41 (VTVYDYCHLGH) match the 'HIGH' region motif. Zn(2+) contacts are provided by C216, H241, and E245. A 'KMSKS' region motif is present at residues 273–277 (KMSKS). Residue K276 coordinates ATP.

It belongs to the class-I aminoacyl-tRNA synthetase family. As to quaternary structure, monomer. Requires Zn(2+) as cofactor.

It localises to the cytoplasm. The catalysed reaction is tRNA(Cys) + L-cysteine + ATP = L-cysteinyl-tRNA(Cys) + AMP + diphosphate. The sequence is that of Cysteine--tRNA ligase from Cyanothece sp. (strain PCC 7425 / ATCC 29141).